The chain runs to 201 residues: MVYSVGLTGNIASGKSTVAEFFSELGINVIYADKIAKELTSKNTPCYQDIISHFGSSVVLNNGELDRKRIRDIIFSNSNERLWLESLLHPVIRKKIEEQLIVCTSPYCLIEIPLLFNKHHYPYLQKVLLVIAPLESQLDRIVKRDHCTKKQALAILATQPNLEQRLEAADDVLINESGLSELKAKVNKLHQKYLREAKIKQ.

A DPCK domain is found at 4–201; the sequence is SVGLTGNIAS…KYLREAKIKQ (198 aa). 12-17 is a binding site for ATP; sequence ASGKST.

The protein belongs to the CoaE family.

Its subcellular location is the cytoplasm. The catalysed reaction is 3'-dephospho-CoA + ATP = ADP + CoA + H(+). It functions in the pathway cofactor biosynthesis; coenzyme A biosynthesis; CoA from (R)-pantothenate: step 5/5. Functionally, catalyzes the phosphorylation of the 3'-hydroxyl group of dephosphocoenzyme A to form coenzyme A. In Legionella pneumophila subsp. pneumophila (strain Philadelphia 1 / ATCC 33152 / DSM 7513), this protein is Dephospho-CoA kinase.